The primary structure comprises 372 residues: uncharacterized protein (372 aa).

An FAD-binding site is contributed by 4-18 (YIIVGAGILGASTAY).

The protein belongs to the DadA oxidoreductase family. FAD serves as cofactor.

This is an uncharacterized protein from Bacillus subtilis (strain 168).